The following is a 485-amino-acid chain: Glutamate--tRNA ligase (485 aa).

The 'HIGH' region signature appears at 10-20 (PSPTGHLHIGN). Positions 253-257 (KLSKR) match the 'KMSKS' region motif. Lys256 provides a ligand contact to ATP.

This sequence belongs to the class-I aminoacyl-tRNA synthetase family. Glutamate--tRNA ligase type 1 subfamily. In terms of assembly, monomer.

It localises to the cytoplasm. It catalyses the reaction tRNA(Glu) + L-glutamate + ATP = L-glutamyl-tRNA(Glu) + AMP + diphosphate. Its function is as follows. Catalyzes the attachment of glutamate to tRNA(Glu) in a two-step reaction: glutamate is first activated by ATP to form Glu-AMP and then transferred to the acceptor end of tRNA(Glu). The chain is Glutamate--tRNA ligase from Enterococcus faecalis (strain ATCC 700802 / V583).